Here is a 208-residue protein sequence, read N- to C-terminus: 23 kDa protein (208 aa).

This is 23 kDa protein from Pea early browning virus.